We begin with the raw amino-acid sequence, 221 residues long: 7-cyano-7-deazaguanine synthase (221 aa).

12–22 is a binding site for ATP; sequence FSGGQDSTTCL. Positions 190, 199, 202, and 205 each coordinate Zn(2+).

It belongs to the QueC family. Homodimer. It depends on Zn(2+) as a cofactor.

The enzyme catalyses 7-carboxy-7-deazaguanine + NH4(+) + ATP = 7-cyano-7-deazaguanine + ADP + phosphate + H2O + H(+). It functions in the pathway purine metabolism; 7-cyano-7-deazaguanine biosynthesis. Catalyzes the ATP-dependent conversion of 7-carboxy-7-deazaguanine (CDG) to 7-cyano-7-deazaguanine (preQ(0)). The chain is 7-cyano-7-deazaguanine synthase from Clostridium novyi (strain NT).